The sequence spans 338 residues: Aspartate carbamoyltransferase catalytic subunit (338 aa).

Carbamoyl phosphate-binding residues include Arg-59 and Thr-60. Residue Lys-87 participates in L-aspartate binding. Residues Arg-109, His-142, and Gln-145 each contribute to the carbamoyl phosphate site. Residues Arg-182 and Arg-253 each coordinate L-aspartate. Gly-294 and Pro-295 together coordinate carbamoyl phosphate.

The protein belongs to the aspartate/ornithine carbamoyltransferase superfamily. ATCase family. In terms of assembly, heterododecamer (2C3:3R2) of six catalytic PyrB chains organized as two trimers (C3), and six regulatory PyrI chains organized as three dimers (R2).

The enzyme catalyses carbamoyl phosphate + L-aspartate = N-carbamoyl-L-aspartate + phosphate + H(+). Its pathway is pyrimidine metabolism; UMP biosynthesis via de novo pathway; (S)-dihydroorotate from bicarbonate: step 2/3. Catalyzes the condensation of carbamoyl phosphate and aspartate to form carbamoyl aspartate and inorganic phosphate, the committed step in the de novo pyrimidine nucleotide biosynthesis pathway. The protein is Aspartate carbamoyltransferase catalytic subunit of Prochlorococcus marinus subsp. pastoris (strain CCMP1986 / NIES-2087 / MED4).